Here is a 694-residue protein sequence, read N- to C-terminus: MRHNRLKVLILGLVLLLTSCRADGPLHSADHGMGGMGMGGHGLDASPAPGYGVPVIPKDPNLRCEEITIPMCRGIGYNMTSFPNEMNHETQDEAGLEVHQFWPLVEIKCSPDLKFFLCSMYTPICLEDYHKPLPVCRSVCERARSGCAPIMQQYSFEWPERMACEHLPLHGDPDNLCMEQPSYTEAGSGGSSGGSGGSGSGSGSGGKRKQGGSGSGGSGAGGSSGSTSTKPCRGRNSKNCQNPQGEKASGKECSCSCRSPLIFLGKEQLLQQQSQMPMMHHPHHWYMNLTVQRIAGVPNCGIPCKGPFFSNDEKDFAGLWIALWSGLCFCSTLMTLTTFIIDTERFKYPERPIVFLSACYFMVAVGYLSRNFLQNEEIACDGLLLRESSTGPHSCTLVFLLTYFFGMASSIWWVILSFTWFLAAGLKWGNEAITKHSQYFHLAAWLIPTVQSVAVLLLSAVDGDPILGICYVGNLNPDHLKTFVLAPLFVYLVIGTTFLMAGFVSLFRIRSVIKQQGGVGAGVKADKLEKLMIRIGIFSVLYTVPATIVIGCYLYEAAYFEDWIKALACPCAQVKGPGKKPLYSVLMLKYFMALAVGITSGVWIWSGKTLESWRRFWRRLLGAPDRTGANQALIKQRPPIPHPYAGSGMGMPVGSAAGSLLATPYTQAGGASVASTSHHHLHHHVLKQPAASHV.

The N-terminal stretch at 1 to 22 (MRHNRLKVLILGLVLLLTSCRA) is a signal peptide. The Extracellular portion of the chain corresponds to 23–315 (DGPLHSADHG…GPFFSNDEKD (293 aa)). The region spanning 59–180 (DPNLRCEEIT…GDPDNLCMEQ (122 aa)) is the FZ domain. Cystine bridges form between cysteine 64–cysteine 125, cysteine 72–cysteine 118, cysteine 109–cysteine 147, cysteine 136–cysteine 177, and cysteine 140–cysteine 164. Asparagine 78 is a glycosylation site (N-linked (GlcNAc...) asparagine). Residues 175–253 (NLCMEQPSYT…QGEKASGKEC (79 aa)) are disordered. Gly residues predominate over residues 187–224 (GSGGSSGGSGGSGSGSGSGGKRKQGGSGSGGSGAGGSS). A glycan (N-linked (GlcNAc...) asparagine) is linked at asparagine 288. A helical membrane pass occupies residues 316–336 (FAGLWIALWSGLCFCSTLMTL). At 337–352 (TTFIIDTERFKYPERP) the chain is on the cytoplasmic side. The helical transmembrane segment at 353-373 (IVFLSACYFMVAVGYLSRNFL) threads the bilayer. At 374–397 (QNEEIACDGLLLRESSTGPHSCTL) the chain is on the extracellular side. Residues 398 to 418 (VFLLTYFFGMASSIWWVILSF) form a helical membrane-spanning segment. At 419–439 (TWFLAAGLKWGNEAITKHSQY) the chain is on the cytoplasmic side. Residues 440–460 (FHLAAWLIPTVQSVAVLLLSA) form a helical membrane-spanning segment. Residues 461–482 (VDGDPILGICYVGNLNPDHLKT) are Extracellular-facing. Residues 483 to 503 (FVLAPLFVYLVIGTTFLMAGF) traverse the membrane as a helical segment. Over 504–534 (VSLFRIRSVIKQQGGVGAGVKADKLEKLMIR) the chain is Cytoplasmic. Residues 535 to 555 (IGIFSVLYTVPATIVIGCYLY) traverse the membrane as a helical segment. The Extracellular segment spans residues 556-584 (EAAYFEDWIKALACPCAQVKGPGKKPLYS). A helical transmembrane segment spans residues 585–605 (VLMLKYFMALAVGITSGVWIW). Residues 606-694 (SGKTLESWRR…VLKQPAASHV (89 aa)) lie on the Cytoplasmic side of the membrane. The Lys-Thr-X-X-X-Trp motif, mediates interaction with the PDZ domain of Dvl family members signature appears at 608–613 (KTLESW). The PDZ-binding signature appears at 692 to 694 (SHV).

Belongs to the G-protein coupled receptor Fz/Smo family. As to quaternary structure, interacts with ATP6AP2.

Its subcellular location is the cell membrane. In terms of biological role, receptor for Wnt proteins. Most of frizzled receptors are coupled to the beta-catenin canonical signaling pathway, which leads to the activation of disheveled proteins, inhibition of GSK-3 kinase, nuclear accumulation of beta-catenin and activation of Wnt target genes. A second signaling pathway involving PKC and calcium fluxes has been seen for some family members, but it is not yet clear if it represents a distinct pathway or if it can be integrated in the canonical pathway, as PKC seems to be required for Wnt-mediated inactivation of GSK-3 kinase. Both pathways seem to involve interactions with G-proteins. Required to coordinate the cytoskeletons of epidermal cells to produce a parallel array of cuticular hairs and bristles. The polypeptide is Frizzled-2 (fz2) (Drosophila melanogaster (Fruit fly)).